Reading from the N-terminus, the 553-residue chain is MANPEIVISSCSSHEEENRCNFNQHTSPSEELLLEDQMRRKLKFFFMNPCEKFWARGRKPWKLAIQILKIAMVTIQLVLFGLSNQMVVAFKEENTVAFKHLFLKGYIDRMDDTYAVYTQSDVYDQIIFAVNQYLQLYNVSVGNHAYENKGTDQSAMAICQHFYKRGNIYPGNDTFDIDPEIETDCFFVEPDEPFHIGTPAENKLNLTLDFHRLLTVELQFKLKAINLQTVRHQELPDCYDFTLTITFDNKAHSGRIKISLDNDISIRECKDWHVSGSIQKNTHNMMIFDAFVILTCLVSLILCIRSVISGLQLQQEFVNFFLLHYKKDVSVSDQMEFVNGWYIMIIISDILTIIGSILKMEIQAKSLTSYDVCSILLGTSTMLVWLGVIRYLGFFAKYNLLILTLQAALPNVIRFCCCAAMIYLGYCFCGWIVLGPYHNKFRSLNMVSECLFSLINGDDMFATFAKMQQKSYLVWLFSRIYLYSFISLFIYMILSLFIALITDTYETIKHYQQDGFPETELRTFISECKDLPNSGKFRLEDDPPVSLFCCCKK.

At 1 to 62 (MANPEIVISS…FWARGRKPWK (62 aa)) the chain is on the cytoplasmic side. The interval 52–62 (KFWARGRKPWK) is interaction with phosphoinositides. Residues 63–83 (LAIQILKIAMVTIQLVLFGLS) form a helical membrane-spanning segment. Over 84-283 (NQMVVAFKEE…VSGSIQKNTH (200 aa)) the chain is Extracellular. The tract at residues 104-118 (KGYIDRMDDTYAVYT) is extracellular/lumenal pore loop. N138 carries N-linked (GlcNAc...) asparagine glycosylation. A disulfide bridge links C159 with C185. Residue N205 is glycosylated (N-linked (GlcNAc...) asparagine). A disulfide bridge links C238 with C269. The helical transmembrane segment at 284–304 (NMMIFDAFVILTCLVSLILCI) threads the bilayer. The Cytoplasmic portion of the chain corresponds to 305 to 341 (RSVISGLQLQQEFVNFFLLHYKKDVSVSDQMEFVNGW). A helical transmembrane segment spans residues 342–362 (YIMIIISDILTIIGSILKMEI). Residues 363 to 371 (QAKSLTSYD) lie on the Extracellular side of the membrane. The helical transmembrane segment at 372–392 (VCSILLGTSTMLVWLGVIRYL) threads the bilayer. Residues 393-414 (GFFAKYNLLILTLQAALPNVIR) are Cytoplasmic-facing. The helical transmembrane segment at 415–435 (FCCCAAMIYLGYCFCGWIVLG) threads the bilayer. The Extracellular portion of the chain corresponds to 436–443 (PYHNKFRS). The pore-forming intramembrane region spans 444–464 (LNMVSECLFSLINGDDMFATF). A Selectivity filter motif is present at residues 456–459 (NGDD). Topologically, residues 465–475 (AKMQQKSYLVW) are extracellular. The chain crosses the membrane as a helical span at residues 476–497 (LFSRIYLYSFISLFIYMILSLF). Residues 498 to 553 (IALITDTYETIKHYQQDGFPETELRTFISECKDLPNSGKFRLEDDPPVSLFCCCKK) are Cytoplasmic-facing.

The protein belongs to the transient receptor (TC 1.A.4) family. Polycystin subfamily. MCOLN3 sub-subfamily. As to quaternary structure, homotetramer. Can heterooligomerize with MCOLN1; heteromeric assemblies have different channel properties as compared to the respective homooligomers and may be tissue-specific. May heterooligomerize with TRPV5 to form a functional distinct ion channel. Interacts with GABARAPL2. In terms of processing, N-glycosylated.

The protein localises to the lysosome membrane. It localises to the early endosome membrane. Its subcellular location is the late endosome membrane. It is found in the cytoplasmic vesicle. The protein resides in the autophagosome membrane. The protein localises to the cell projection. It localises to the stereocilium membrane. The catalysed reaction is Ca(2+)(in) = Ca(2+)(out). It carries out the reaction Mg(2+)(in) = Mg(2+)(out). The enzyme catalyses K(+)(in) = K(+)(out). It catalyses the reaction Na(+)(in) = Na(+)(out). Channel activity is activated by PtdIns(3,5)P2 (phosphatidylinositol 3,5-bisphosphate). Inhibited by lumenal H(+) and Na(+). The channel pore shows dynamic behavior and undergoes spontaneous, Ca(2+)-dependent modulation when conducting Ca(2+). Functionally, nonselective cation channel probably playing a role in the regulation of membrane trafficking events. Acts as a Ca(2+)-permeable cation channel with inwardly rectifying activity. Mediates release of Ca(2+) from endosomes to the cytoplasm, contributes to endosomal acidification and is involved in the regulation of membrane trafficking and fusion in the endosomal pathway. Also permeable to Mg(2+), Na(+) and K(+). Does not seem to act as mechanosensory transduction channel in inner ear sensory hair cells. Proposed to play a critical role at the cochlear stereocilia ankle-link region during hair-bundle growth. Involved in the regulation of autophagy. Through association with GABARAPL2 may be involved in autophagosome formation possibly providing Ca(2+) for the fusion process. Through a possible and probably tissue-specific heteromerization with MCOLN1 may be at least in part involved in many lysosome-dependent cellular events. Possible heteromeric ion channel assemblies with TRPV5 show pharmacological similarity with TRPML3. This chain is Mucolipin-3, found in Callithrix jacchus (White-tufted-ear marmoset).